Here is a 356-residue protein sequence, read N- to C-terminus: Red-sensitive opsin-2 (356 aa).

The Extracellular segment spans residues 1–48 (MAEWANAAFAARRRGDETTRDNAFSYTNSNNTRDPFEGPNYHIAPRWV). N-linked (GlcNAc...) asparagine glycosylation occurs at asparagine 30. A helical transmembrane segment spans residues 49–73 (YNVATVWMFFVVVASTFTNGLVLVA). At 74 to 85 (TAKFKKLRHPLN) the chain is on the cytoplasmic side. A helical membrane pass occupies residues 86-111 (WILVNLAIADLGETLFASTISVINQV). Residues 112-125 (FGYFILGHPMCIFE) are Extracellular-facing. The cysteines at positions 122 and 199 are disulfide-linked. Residues 126-145 (GYTVSVCGIAGLWSLTVISW) traverse the membrane as a helical segment. The Cytoplasmic portion of the chain corresponds to 146–164 (ERWVVVCKPFGNVKFDGKW). A helical membrane pass occupies residues 165 to 188 (ASAGIIFSWVWAAVWCAPPIFGWS). At 189-214 (RYWPHGLKTSCGPDVFGGNEDPGVQS) the chain is on the extracellular side. Residues 215–242 (YMLVLMITCCILPLAIIILCYIAVFLAI) traverse the membrane as a helical segment. Residues 243 to 264 (HAVAQQQKDSESTQKAEKEVSR) lie on the Cytoplasmic side of the membrane. Residues 265–288 (MVVVMILAFCLCWGPYTAFACFAA) traverse the membrane as a helical segment. The Extracellular segment spans residues 289 to 296 (ANPGYAFH). A helical membrane pass occupies residues 297–321 (PLAAAMPAYFAKSATIYNPIIYVFM). Residue lysine 308 is modified to N6-(retinylidene)lysine. Residues 322–356 (NRQFRVCIMQLFGKKVDDGSEVSTSKTEVSSVAPA) are Cytoplasmic-facing.

It belongs to the G-protein coupled receptor 1 family. Opsin subfamily. In terms of processing, phosphorylated on some or all of the serine and threonine residues present in the C-terminal region.

It is found in the membrane. Its function is as follows. Visual pigments are the light-absorbing molecules that mediate vision. They consist of an apoprotein, opsin, covalently linked to cis-retinal. This is Red-sensitive opsin-2 (opn1lw2) from Danio rerio (Zebrafish).